The chain runs to 270 residues: NAD kinase (270 aa).

Residue aspartate 49 is the Proton acceptor of the active site. Residues 49 to 50 (DG), arginine 54, 126 to 127 (NE), arginine 152, aspartate 154, 165 to 170 (TAYNKS), alanine 189, and glutamine 227 each bind NAD(+).

Belongs to the NAD kinase family. The cofactor is a divalent metal cation.

It localises to the cytoplasm. The enzyme catalyses NAD(+) + ATP = ADP + NADP(+) + H(+). In terms of biological role, involved in the regulation of the intracellular balance of NAD and NADP, and is a key enzyme in the biosynthesis of NADP. Catalyzes specifically the phosphorylation on 2'-hydroxyl of the adenosine moiety of NAD to yield NADP. In Lactococcus lactis subsp. cremoris (strain MG1363), this protein is NAD kinase.